Consider the following 367-residue polypeptide: 3-isopropylmalate dehydrogenase (367 aa).

NAD(+) is bound at residue 77-90; the sequence is GPKWDAVPYEVRPE. Substrate is bound by residues Arg97, Arg107, Arg135, and Asp226. Residues Asp226, Asp250, and Asp254 each contribute to the Mg(2+) site. 290 to 302 contacts NAD(+); the sequence is GSAPDIAGKGIAN.

Belongs to the isocitrate and isopropylmalate dehydrogenases family. LeuB type 1 subfamily. As to quaternary structure, homodimer. Mg(2+) serves as cofactor. Requires Mn(2+) as cofactor.

The protein resides in the cytoplasm. It carries out the reaction (2R,3S)-3-isopropylmalate + NAD(+) = 4-methyl-2-oxopentanoate + CO2 + NADH. Its pathway is amino-acid biosynthesis; L-leucine biosynthesis; L-leucine from 3-methyl-2-oxobutanoate: step 3/4. Functionally, catalyzes the oxidation of 3-carboxy-2-hydroxy-4-methylpentanoate (3-isopropylmalate) to 3-carboxy-4-methyl-2-oxopentanoate. The product decarboxylates to 4-methyl-2 oxopentanoate. This Mesorhizobium japonicum (strain LMG 29417 / CECT 9101 / MAFF 303099) (Mesorhizobium loti (strain MAFF 303099)) protein is 3-isopropylmalate dehydrogenase.